The chain runs to 182 residues: ATP synthase subunit b, chloroplastic (182 aa).

Residues 36 to 56 (ILLLLLGLMYVLKEFLGSILV) traverse the membrane as a helical segment.

The protein belongs to the ATPase B chain family. In terms of assembly, F-type ATPases have 2 components, F(1) - the catalytic core - and F(0) - the membrane proton channel. F(1) has five subunits: alpha(3), beta(3), gamma(1), delta(1), epsilon(1). F(0) has four main subunits: a(1), b(1), b'(1) and c(10-14). The alpha and beta chains form an alternating ring which encloses part of the gamma chain. F(1) is attached to F(0) by a central stalk formed by the gamma and epsilon chains, while a peripheral stalk is formed by the delta, b and b' chains.

Its subcellular location is the plastid. It localises to the chloroplast thylakoid membrane. Functionally, f(1)F(0) ATP synthase produces ATP from ADP in the presence of a proton or sodium gradient. F-type ATPases consist of two structural domains, F(1) containing the extramembraneous catalytic core and F(0) containing the membrane proton channel, linked together by a central stalk and a peripheral stalk. During catalysis, ATP synthesis in the catalytic domain of F(1) is coupled via a rotary mechanism of the central stalk subunits to proton translocation. Component of the F(0) channel, it forms part of the peripheral stalk, linking F(1) to F(0). This is ATP synthase subunit b, chloroplastic from Gracilaria tenuistipitata var. liui (Red alga).